A 297-amino-acid polypeptide reads, in one-letter code: Bifunctional protein FolD 2 (297 aa).

Residues 177–179 (GKS), Ile202, and Ile243 contribute to the NADP(+) site.

It belongs to the tetrahydrofolate dehydrogenase/cyclohydrolase family. Homodimer.

The catalysed reaction is (6R)-5,10-methylene-5,6,7,8-tetrahydrofolate + NADP(+) = (6R)-5,10-methenyltetrahydrofolate + NADPH. The enzyme catalyses (6R)-5,10-methenyltetrahydrofolate + H2O = (6R)-10-formyltetrahydrofolate + H(+). The protein operates within one-carbon metabolism; tetrahydrofolate interconversion. Catalyzes the oxidation of 5,10-methylenetetrahydrofolate to 5,10-methenyltetrahydrofolate and then the hydrolysis of 5,10-methenyltetrahydrofolate to 10-formyltetrahydrofolate. This is Bifunctional protein FolD 2 from Rhizorhabdus wittichii (strain DSM 6014 / CCUG 31198 / JCM 15750 / NBRC 105917 / EY 4224 / RW1) (Sphingomonas wittichii).